The chain runs to 224 residues: Protein-L-isoaspartate O-methyltransferase (224 aa).

S70 is an active-site residue.

The protein belongs to the methyltransferase superfamily. L-isoaspartyl/D-aspartyl protein methyltransferase family.

Its subcellular location is the cytoplasm. The catalysed reaction is [protein]-L-isoaspartate + S-adenosyl-L-methionine = [protein]-L-isoaspartate alpha-methyl ester + S-adenosyl-L-homocysteine. Catalyzes the methyl esterification of L-isoaspartyl residues in peptides and proteins that result from spontaneous decomposition of normal L-aspartyl and L-asparaginyl residues. It plays a role in the repair and/or degradation of damaged proteins. The protein is Protein-L-isoaspartate O-methyltransferase of Cellvibrio japonicus (strain Ueda107) (Pseudomonas fluorescens subsp. cellulosa).